A 509-amino-acid polypeptide reads, in one-letter code: Methylthioalkylmalate synthase 1-1, chloroplastic (509 aa).

The N-terminal 55 residues, 1–55 (MSFSPTYSIVMASPLLTSSQMIPTTGSTVGFRSILPFGSLRLTRPYKKTSLFISY), are a transit peptide targeting the chloroplast. A Pyruvate carboxyltransferase domain is found at 91–365 (VRVYDTTLRD…YTRIDTRQIM (275 aa)). Mn(2+)-binding residues include Asp100, His298, and His300.

Belongs to the alpha-IPM synthase/homocitrate synthase family. In terms of assembly, monomer. Requires Mn(2+) as cofactor. It depends on Co(2+) as a cofactor.

The protein localises to the plastid. It is found in the chloroplast. The enzyme catalyses 4-methylsulfanyl-2-oxobutanoate + acetyl-CoA + H2O = 2-(2-methylsulfanyl)ethylmalate + CoA + H(+). It participates in secondary metabolite biosynthesis. With respect to regulation, inhibited by EDTA, Cu(2+) and Zn(2+). Determines the side chain length of aliphatic glucosinolate structures. Involved in the biosynthesis of glucosinolate derivative natural products such as 6-(methylsulfinyl)hexylisothiocyanate (6-MSITC), a compound found in wasabi with diverse health-promoting properties. Catalyzes the conversion of 4-methylsulfanyl-2-oxobutanoate (4-MTOB) into 2-(2-methylsulfanyl)ethylmalate (2-(2-MT)EM). The polypeptide is Methylthioalkylmalate synthase 1-1, chloroplastic (Eutrema japonicum (Wasabi plant)).